We begin with the raw amino-acid sequence, 419 residues long: DNA ligase (419 aa).

The interval 1–120 is NTD; the sequence is MLNQFPGQYS…ARQKRGAHTN (120 aa). The tract at residues 121–317 is AD domain; sequence RGMIPPMLVK…NYHSAHLAKL (197 aa). 4 residues coordinate ATP: glutamine 149, lysine 151, glutamate 203, and phenylalanine 232. The N6-AMP-lysine intermediate role is filled by lysine 151. Glutamate 203 is a binding site for a divalent metal cation. Glutamate 291 is an a divalent metal cation binding site. Isoleucine 294 and lysine 316 together coordinate ATP. The OB domain stretch occupies residues 318–419; that stretch reads KPLLDAEFIL…REPINVLEII (102 aa).

This sequence belongs to the ATP-dependent DNA ligase family. The cofactor is a divalent metal cation.

It is found in the virion. The catalysed reaction is ATP + (deoxyribonucleotide)n-3'-hydroxyl + 5'-phospho-(deoxyribonucleotide)m = (deoxyribonucleotide)n+m + AMP + diphosphate.. Very low-fidelity DNA ligase that seals nicks in double-stranded DNA during DNA repair. Together with the viral repair DNA polymerase X, fills the single nucleotide gaps generated by the AP endonuclease. It is not essential for viral replication and recombination. Displays a very low adenylation activity towards DNA with 3'-dideoxy- or 3'-amino-terminated nicks compared to regular nick DNA. In Ornithodoros (relapsing fever ticks), this protein is DNA ligase (LIG).